Consider the following 280-residue polypeptide: Fructose-1,6-bisphosphatase class 1 (280 aa).

Positions 64, 83, 85, and 86 each coordinate Mg(2+). Residues 86 to 89 (DGSS), Y189, and K220 contribute to the substrate site. E226 serves as a coordination point for Mg(2+).

The protein belongs to the FBPase class 1 family. In terms of assembly, homotetramer. Requires Mg(2+) as cofactor.

The protein resides in the cytoplasm. The catalysed reaction is beta-D-fructose 1,6-bisphosphate + H2O = beta-D-fructose 6-phosphate + phosphate. It participates in carbohydrate biosynthesis; gluconeogenesis. This Campylobacter jejuni (strain RM1221) protein is Fructose-1,6-bisphosphatase class 1.